The primary structure comprises 92 residues: Probable Fe(2+)-trafficking protein (92 aa).

It belongs to the Fe(2+)-trafficking protein family.

Could be a mediator in iron transactions between iron acquisition and iron-requiring processes, such as synthesis and/or repair of Fe-S clusters in biosynthetic enzymes. This Shewanella pealeana (strain ATCC 700345 / ANG-SQ1) protein is Probable Fe(2+)-trafficking protein.